Reading from the N-terminus, the 405-residue chain is CRS2-associated factor 1, mitochondrial (405 aa).

The N-terminal 20 residues, Met-1–Arg-20, are a transit peptide targeting the mitochondrion. The disordered stretch occupies residues Arg-32–Gly-75. 2 CRM domains span residues Ala-157–Lys-255 and Asp-277–Asp-373. The interval Ser-384–Thr-405 is disordered.

In terms of assembly, part of large ribonucleo-protein complexes that include group IIB introns.

It is found in the mitochondrion. Its function is as follows. May be involved in the splicing of group IIB introns in mitochondria. This chain is CRS2-associated factor 1, mitochondrial, found in Arabidopsis thaliana (Mouse-ear cress).